The following is a 181-amino-acid chain: uncharacterized protein (181 aa).

Residues 1–159 (MTVHHFTFHI…KACWMMQSLT (159 aa)) form the N-acetyltransferase domain.

This sequence belongs to the acetyltransferase family.

This is an uncharacterized protein from Escherichia coli (strain K12).